The following is a 718-amino-acid chain: Protein Smaug homolog 1 (718 aa).

S168 carries the post-translational modification Phosphoserine. Disordered stretches follow at residues 278–323 (ARGP…EEGS), 416–474 (KAYS…LQPH), and 572–601 (NRGF…QYQI). The SAM domain occupies 323–391 (SGMKDVPAWL…ERQNLLKSLE (69 aa)). At S420 the chain carries Phosphoserine. T424 carries the phosphothreonine modification. A compositionally biased stretch (low complexity) spans 453-466 (GAAATGATATPSAG). Omega-N-methylarginine is present on R573. S580 bears the Phosphoserine mark.

This sequence belongs to the SMAUG family.

The protein localises to the cytoplasm. It is found in the cell projection. The protein resides in the dendrite. Its subcellular location is the synapse. It localises to the synaptosome. In terms of biological role, acts as a translational repressor of SRE-containing messengers. This chain is Protein Smaug homolog 1 (SAMD4A), found in Homo sapiens (Human).